The primary structure comprises 119 residues: uncharacterized protein (119 aa).

This is an uncharacterized protein from Orgyia pseudotsugata (Douglas-fir tussock moth).